Consider the following 402-residue polypeptide: 4-hydroxy-3-methylbut-2-enyl diphosphate reductase (402 aa).

Cysteine 66 is a binding site for [4Fe-4S] cluster. Position 96 (histidine 96) interacts with (2E)-4-hydroxy-3-methylbut-2-enyl diphosphate. Histidine 96 is a dimethylallyl diphosphate binding site. Histidine 96 is a binding site for isopentenyl diphosphate. Cysteine 157 contributes to the [4Fe-4S] cluster binding site. Residue histidine 185 coordinates (2E)-4-hydroxy-3-methylbut-2-enyl diphosphate. Dimethylallyl diphosphate is bound at residue histidine 185. Histidine 185 lines the isopentenyl diphosphate pocket. Glutamate 187 serves as the catalytic Proton donor. Threonine 250 serves as a coordination point for (2E)-4-hydroxy-3-methylbut-2-enyl diphosphate. Cysteine 288 is a [4Fe-4S] cluster binding site. (2E)-4-hydroxy-3-methylbut-2-enyl diphosphate is bound by residues serine 317, serine 318, asparagine 319, and serine 379. Residues serine 317, serine 318, asparagine 319, and serine 379 each contribute to the dimethylallyl diphosphate site. Positions 317, 318, 319, and 379 each coordinate isopentenyl diphosphate.

Belongs to the IspH family. [4Fe-4S] cluster is required as a cofactor.

The enzyme catalyses isopentenyl diphosphate + 2 oxidized [2Fe-2S]-[ferredoxin] + H2O = (2E)-4-hydroxy-3-methylbut-2-enyl diphosphate + 2 reduced [2Fe-2S]-[ferredoxin] + 2 H(+). It carries out the reaction dimethylallyl diphosphate + 2 oxidized [2Fe-2S]-[ferredoxin] + H2O = (2E)-4-hydroxy-3-methylbut-2-enyl diphosphate + 2 reduced [2Fe-2S]-[ferredoxin] + 2 H(+). The protein operates within isoprenoid biosynthesis; dimethylallyl diphosphate biosynthesis; dimethylallyl diphosphate from (2E)-4-hydroxy-3-methylbutenyl diphosphate: step 1/1. It functions in the pathway isoprenoid biosynthesis; isopentenyl diphosphate biosynthesis via DXP pathway; isopentenyl diphosphate from 1-deoxy-D-xylulose 5-phosphate: step 6/6. In terms of biological role, catalyzes the conversion of 1-hydroxy-2-methyl-2-(E)-butenyl 4-diphosphate (HMBPP) into a mixture of isopentenyl diphosphate (IPP) and dimethylallyl diphosphate (DMAPP). Acts in the terminal step of the DOXP/MEP pathway for isoprenoid precursor biosynthesis. This is 4-hydroxy-3-methylbut-2-enyl diphosphate reductase from Crocosphaera subtropica (strain ATCC 51142 / BH68) (Cyanothece sp. (strain ATCC 51142)).